A 77-amino-acid polypeptide reads, in one-letter code: Acyl carrier protein (77 aa).

One can recognise a Carrier domain in the interval S2 to Q77. The residue at position 37 (S37) is an O-(pantetheine 4'-phosphoryl)serine.

Belongs to the acyl carrier protein (ACP) family. Post-translationally, 4'-phosphopantetheine is transferred from CoA to a specific serine of apo-ACP by AcpS. This modification is essential for activity because fatty acids are bound in thioester linkage to the sulfhydryl of the prosthetic group.

The protein localises to the cytoplasm. It participates in lipid metabolism; fatty acid biosynthesis. Functionally, carrier of the growing fatty acid chain in fatty acid biosynthesis. The chain is Acyl carrier protein from Jannaschia sp. (strain CCS1).